The primary structure comprises 210 residues: Orotate phosphoribosyltransferase (210 aa).

5-phospho-alpha-D-ribose 1-diphosphate contacts are provided by residues Arg-97, Lys-101, His-103, and 123 to 131; that span reads EDLISTGGS. Ser-127 lines the orotate pocket.

Belongs to the purine/pyrimidine phosphoribosyltransferase family. PyrE subfamily. In terms of assembly, homodimer. Mg(2+) serves as cofactor.

The catalysed reaction is orotidine 5'-phosphate + diphosphate = orotate + 5-phospho-alpha-D-ribose 1-diphosphate. It functions in the pathway pyrimidine metabolism; UMP biosynthesis via de novo pathway; UMP from orotate: step 1/2. In terms of biological role, catalyzes the transfer of a ribosyl phosphate group from 5-phosphoribose 1-diphosphate to orotate, leading to the formation of orotidine monophosphate (OMP). This Porphyromonas gingivalis (strain ATCC BAA-308 / W83) protein is Orotate phosphoribosyltransferase.